The primary structure comprises 257 residues: MFSSDENLFNFIVFFILVMAFPTFILCQFFTSPYGKHYTSADSGTTISPPIAWAFMESPTLWLTIIVFRLGKNYTNPLAFLLISPYLFHYTNRTIIYPLRLRSRNTKNNFPLNIAVTAFIFNLLNAYIQSRWVSHYANYQEDDWFWVRFGIGLVIFGSGMLLNIWADGVLLGLKSQGGGYKIPRGGLFDYVSSPNYLGEIMEWLGWALMTWSWAGLAFFVYTCANLVPRAVSNHKWYLQKFGEDYPKNRKAVFPFLY.

6 consecutive transmembrane segments (helical) span residues 11–31 (FIVF…QFFT), 47–67 (ISPP…TIIV), 78–97 (LAFL…TIIY), 110–130 (FPLN…YIQS), 151–171 (IGLV…GVLL), and 200–220 (IMEW…AFFV).

The protein belongs to the steroid 5-alpha reductase family. In terms of tissue distribution, mostly expressed in leaves and hypocotyls and, to a lower extent, in stems, cotyledons, roots, seeds and callus.

Its subcellular location is the membrane. The catalysed reaction is a 3-oxo-5alpha-steroid + NADP(+) = a 3-oxo-Delta(4)-steroid + NADPH + H(+). Its pathway is plant hormone biosynthesis; brassinosteroid biosynthesis. Its activity is regulated as follows. Repressed by steroid (4-MA, VG106, PD91, PD17, Finasteride) and non-steroid (AS601811, AFA27, AFA76, AFA131, AFA192) inhibitors; steroid inhibitors are generally more efficient. Functionally, involved in a reduction step in the biosynthesis of the plant steroid, brassinolide (BL). Can use progesterone, testosterone, androstenedione and campestenone as substrate. The protein is Steroid 5-alpha-reductase DET2 of Solanum lycopersicum (Tomato).